The chain runs to 156 residues: Snaclec stejaggregin-B subunit alpha (156 aa).

A signal peptide spans 1–23; that stretch reads MGRFISVSFGLLVVFLSLSGTGA. 3 cysteine pairs are disulfide-bonded: C25/C36, C53/C150, and C125/C142. The C-type lectin domain occupies 32–151; it reads FKQYCYQIIK…CEQKHLFMCK (120 aa).

It belongs to the snaclec family. In terms of assembly, heteromultimer; disulfide-linked. As to expression, expressed by the venom gland.

It is found in the secreted. Functionally, interferes with one step of hemostasis (modulation of platelet aggregation, or coagulation cascade, for example). The chain is Snaclec stejaggregin-B subunit alpha from Trimeresurus stejnegeri (Chinese green tree viper).